The primary structure comprises 273 residues: Mediator of RNA polymerase II transcription subunit 27 (273 aa).

It belongs to the Mediator complex subunit 27 family. In terms of assembly, component of the Mediator complex.

The protein localises to the nucleus. Component of the Mediator complex, a coactivator involved in the regulated transcription of nearly all RNA polymerase II-dependent genes. Mediator functions as a bridge to convey information from gene-specific regulatory proteins to the basal RNA polymerase II transcription machinery. Mediator is recruited to promoters by direct interactions with regulatory proteins and serves as a scaffold for the assembly of a functional preinitiation complex with RNA polymerase II and the general transcription factors. The protein is Mediator of RNA polymerase II transcription subunit 27 (med27) of Schizosaccharomyces pombe (strain 972 / ATCC 24843) (Fission yeast).